The following is a 187-amino-acid chain: MGRYSREPDNPAKSCKARGSNLRVHFKNTYETAMAIRKMPLRRAVRYLKNVIEKKECIPFRRFNGGVGRCAQAKQFGTTQGRWPKKSAEFLLQLLRNAESNADNKTLDVDRLVIDHIQVNRAPCLRRRTYRAHGRINPYMSSPCHIEVCLSEREDAVARVAPTDDAPAKKKLSKKKLARQKEKMMRE.

Residues 161 to 187 (APTDDAPAKKKLSKKKLARQKEKMMRE) are disordered. The segment covering 169 to 178 (KKKLSKKKLA) has biased composition (basic residues).

Belongs to the universal ribosomal protein uL22 family.

The protein is Large ribosomal subunit protein uL22 (RpL17) of Bombyx mori (Silk moth).